The following is a 429-amino-acid chain: Histidine--tRNA ligase (429 aa).

Belongs to the class-II aminoacyl-tRNA synthetase family. Homodimer.

The protein resides in the cytoplasm. It carries out the reaction tRNA(His) + L-histidine + ATP = L-histidyl-tRNA(His) + AMP + diphosphate + H(+). The sequence is that of Histidine--tRNA ligase from Streptococcus pneumoniae (strain Taiwan19F-14).